Consider the following 362-residue polypeptide: UDP-3-O-acylglucosamine N-acyltransferase 1 (362 aa).

The active-site Proton acceptor is the H258.

Belongs to the transferase hexapeptide repeat family. LpxD subfamily. Homotrimer.

The catalysed reaction is a UDP-3-O-[(3R)-3-hydroxyacyl]-alpha-D-glucosamine + a (3R)-hydroxyacyl-[ACP] = a UDP-2-N,3-O-bis[(3R)-3-hydroxyacyl]-alpha-D-glucosamine + holo-[ACP] + H(+). It functions in the pathway bacterial outer membrane biogenesis; LPS lipid A biosynthesis. Catalyzes the N-acylation of UDP-3-O-acylglucosamine using 3-hydroxyacyl-ACP as the acyl donor. Is involved in the biosynthesis of lipid A, a phosphorylated glycolipid that anchors the lipopolysaccharide to the outer membrane of the cell. The protein is UDP-3-O-acylglucosamine N-acyltransferase 1 of Nitrobacter winogradskyi (strain ATCC 25391 / DSM 10237 / CIP 104748 / NCIMB 11846 / Nb-255).